The chain runs to 654 residues: Spindle assembly abnormal protein 6 homolog (654 aa).

The region spanning 39 to 91 (VHRKDLVIRLTDDTDPFFLYNLVISEEDFQSLKLQQGLLVDFLAFPQKFIDLL) is the PISA domain. The stretch at 175–471 (TRQLHITQET…QLLKNNEKLI (297 aa)) forms a coiled coil. At Ser-509 the chain carries Phosphoserine. Positions 568-589 (ASIDGQPGAAVNRPCSNDKENG) are disordered. The residue at position 612 (Ser-612) is a Phosphoserine. The segment covering 634 to 644 (SKPTVLPSSSS) has biased composition (low complexity). Residues 634-654 (SKPTVLPSSSSAYFPGQLPSS) form a disordered region. The residue at position 654 (Ser-654) is a Phosphoserine.

As to quaternary structure, nine homodimers form a cartwheel structure with an internal diameter of 23 nm and radial spokes connecting to the microtubule triplets. Forms a complex with CPAP and STIL. Interacts with FBXW5. Interacts with NUP62 and TUBG1 at the centrosome. Interacts with CENATAC; the interaction increases with CENATAC acetylation. Interacts with FZR1; the interaction is regulated by CENATAC and leads to SASS6 proteasomal degradation. In terms of processing, ubiquitinated by the SCF(FBXW5) E3 ubiquitin-protein ligase complex during S phase, leading to its degradation and preventing centriole reduplication. Ubiquitinated by the anaphase promoting complex/cyclosome (APC/C) E3 ubiquitin-protein ligase complex, leading to its degradation and preventing centriole reduplication.

It is found in the cytoplasm. It localises to the cytoskeleton. Its subcellular location is the microtubule organizing center. The protein localises to the centrosome. The protein resides in the centriole. Its function is as follows. Central scaffolding component of the centrioles ensuring their 9-fold symmetry. Required for centrosome biogenesis and duplication. Required both for mother-centriole-dependent centriole duplication and deuterosome-dependent centriole amplification in multiciliated cells. Not required for centriole formation in embryonic stem cells but necessary to maintain centriole architecture. Required for the recruitment of STIL to the procentriole and for STIL-mediated centriole amplification. This chain is Spindle assembly abnormal protein 6 homolog, found in Mus musculus (Mouse).